Reading from the N-terminus, the 188-residue chain is Adenine phosphoribosyltransferase (188 aa).

The protein belongs to the purine/pyrimidine phosphoribosyltransferase family. Homodimer.

It localises to the cytoplasm. The enzyme catalyses AMP + diphosphate = 5-phospho-alpha-D-ribose 1-diphosphate + adenine. The protein operates within purine metabolism; AMP biosynthesis via salvage pathway; AMP from adenine: step 1/1. Its function is as follows. Catalyzes a salvage reaction resulting in the formation of AMP, that is energically less costly than de novo synthesis. The sequence is that of Adenine phosphoribosyltransferase from Neisseria meningitidis serogroup A / serotype 4A (strain DSM 15465 / Z2491).